Here is a 768-residue protein sequence, read N- to C-terminus: Probable LRR receptor-like serine/threonine-protein kinase At4g37250 (768 aa).

Residues 1–21 (MRMELISVIFFFFCSVLSSSA) form the signal peptide. Topologically, residues 22–328 (LNSDGLVLMK…PNPRTGLRPG (307 aa)) are extracellular. N-linked (GlcNAc...) asparagine glycosylation is present at N64. LRR repeat units follow at residues 67 to 90 (KVLT…GSLL), 91 to 112 (TLQS…SFFN), 115 to 137 (ELRF…IGDL), 139 to 162 (NLLT…ASLR), 163 to 183 (NLTV…GGWR), 184 to 206 (VVEF…FGGY), 207 to 229 (SLQY…IGVN), and 232 to 254 (RNVT…PVFL). N-linked (GlcNAc...) asparagine glycosylation occurs at N99. N144, N163, N196, N212, N233, and N242 each carry an N-linked (GlcNAc...) asparagine glycan. Positions 301–324 (PNTIGSNPVTDPNSQQTDPNPRTG) are disordered. The span at 303 to 320 (TIGSNPVTDPNSQQTDPN) shows a compositional bias: polar residues. A helical membrane pass occupies residues 329-349 (VIIGIVVGDIAGIGILAVIFL). The Cytoplasmic portion of the chain corresponds to 350-768 (YIYRCKKNKI…IKSSSFHYGH (419 aa)). The tract at residues 361-432 (DNNNNDKQRT…NANQRSGDNK (72 aa)) is disordered. The segment covering 378–387 (STFSSSSSSP) has biased composition (low complexity). Acidic residues predominate over residues 407–420 (PSEEEDEDDEDEES). A Protein kinase domain is found at 449–756 (KASAYILGAT…AVLERFHPNS (308 aa)). 2 positions are modified to phosphoserine: S451 and S531. At T553 the chain carries Phosphothreonine. S662 is subject to Phosphoserine.

The protein belongs to the protein kinase superfamily. Ser/Thr protein kinase family.

The protein localises to the membrane. The catalysed reaction is L-seryl-[protein] + ATP = O-phospho-L-seryl-[protein] + ADP + H(+). It catalyses the reaction L-threonyl-[protein] + ATP = O-phospho-L-threonyl-[protein] + ADP + H(+). The polypeptide is Probable LRR receptor-like serine/threonine-protein kinase At4g37250 (Arabidopsis thaliana (Mouse-ear cress)).